The chain runs to 259 residues: Small ribosomal subunit protein eS4 (259 aa).

The S4 RNA-binding domain maps to leucine 41–methionine 100.

The protein belongs to the eukaryotic ribosomal protein eS4 family.

This chain is Small ribosomal subunit protein eS4 (rps-4), found in Caenorhabditis elegans.